Consider the following 179-residue polypeptide: Large ribosomal subunit protein uL22c (179 aa).

It belongs to the universal ribosomal protein uL22 family. As to quaternary structure, part of the 50S ribosomal subunit.

Its subcellular location is the plastid. The protein resides in the chloroplast. This protein binds specifically to 23S rRNA. Functionally, the globular domain of the protein is located near the polypeptide exit tunnel on the outside of the subunit, while an extended beta-hairpin is found that lines the wall of the exit tunnel in the center of the 70S ribosome. The polypeptide is Large ribosomal subunit protein uL22c (rpl22) (Ranunculus macranthus (Large buttercup)).